Reading from the N-terminus, the 178-residue chain is UPF0228 protein MA_4223 (178 aa).

This sequence belongs to the UPF0228 family.

This chain is UPF0228 protein MA_4223, found in Methanosarcina acetivorans (strain ATCC 35395 / DSM 2834 / JCM 12185 / C2A).